Consider the following 195-residue polypeptide: Imidazoleglycerol-phosphate dehydratase (195 aa).

It belongs to the imidazoleglycerol-phosphate dehydratase family.

The protein localises to the cytoplasm. The catalysed reaction is D-erythro-1-(imidazol-4-yl)glycerol 3-phosphate = 3-(imidazol-4-yl)-2-oxopropyl phosphate + H2O. The protein operates within amino-acid biosynthesis; L-histidine biosynthesis; L-histidine from 5-phospho-alpha-D-ribose 1-diphosphate: step 6/9. In Geobacillus kaustophilus (strain HTA426), this protein is Imidazoleglycerol-phosphate dehydratase.